The sequence spans 219 residues: ER lumen protein-retaining receptor (219 aa).

Residues 1–5 are Lumenal-facing; it reads MNPFR. A helical membrane pass occupies residues 6–26; it reads ILGDLSHLTSILILIHNIKTT. The Cytoplasmic portion of the chain corresponds to 27 to 37; that stretch reads RYIEGISFKTQ. A run of 2 helical transmembrane segments spans residues 38–58 and 59–79; these read TLYA…HWVS and LYNA…VVLL. Topologically, residues 80–98 are cytoplasmic; that stretch reads QGSKRTNTIAYNEMLMHDT. Residues 99–116 form a helical membrane-spanning segment; that stretch reads FKIQHLLIGSALMSVFFH. The Lumenal portion of the chain corresponds to 117–118; it reads HK. A helical membrane pass occupies residues 119-139; sequence FTFLELAWSFSVWLESVAILP. The Cytoplasmic portion of the chain corresponds to 140–152; sequence QLYMLSKGGKTRS. A helical membrane pass occupies residues 153–173; sequence LTVHYIFAMGLYRALYIPNWI. Topologically, residues 174-185 are lumenal; that stretch reads WRYSTEDKKLDK. Residues 186–206 form a helical membrane-spanning segment; it reads IAFFAGLLQTLLYSDFFYIYY. Residues 207-219 are Cytoplasmic-facing; it reads TKVIRGKGFKLPK.

This sequence belongs to the ERD2 family.

Its subcellular location is the endoplasmic reticulum membrane. Required for the retention of luminal endoplasmic reticulum proteins. Determines the specificity of the luminal ER protein retention system. Also required for normal vesicular traffic through the Golgi. This receptor strongly recognizes H-D-E-L and weakly recognizes D-D-E-L and K-D-E-L. This Saccharomyces cerevisiae (strain ATCC 204508 / S288c) (Baker's yeast) protein is ER lumen protein-retaining receptor.